Reading from the N-terminus, the 149-residue chain is Large ribosomal subunit protein uL13 (149 aa).

This sequence belongs to the universal ribosomal protein uL13 family. In terms of assembly, part of the 50S ribosomal subunit.

Its function is as follows. This protein is one of the early assembly proteins of the 50S ribosomal subunit, although it is not seen to bind rRNA by itself. It is important during the early stages of 50S assembly. In Chlamydia pneumoniae (Chlamydophila pneumoniae), this protein is Large ribosomal subunit protein uL13.